Here is a 131-residue protein sequence, read N- to C-terminus: Small ribosomal subunit protein bS6 (131 aa).

The disordered stretch occupies residues 98–131; the sequence is EASPMARARDERDSRRGPAGERSYDEAHAEEIGE. A compositionally biased stretch (basic and acidic residues) spans 104–131; the sequence is RARDERDSRRGPAGERSYDEAHAEEIGE.

It belongs to the bacterial ribosomal protein bS6 family.

Its function is as follows. Binds together with bS18 to 16S ribosomal RNA. The protein is Small ribosomal subunit protein bS6 of Shewanella putrefaciens (strain CN-32 / ATCC BAA-453).